The primary structure comprises 473 residues: N-lysine methyltransferase SETD6 (473 aa).

The segment at 1-23 is disordered; that stretch reads MAAPAKRARVSGGSPLVAPCPSP. Phosphoserine occurs at positions 14 and 22. An SET domain is found at 62–286; it reads PKVTVSRQGT…EGHEIFNTYG (225 aa). Residue Lys-63 is modified to N6-methylated lysine; by autocatalysis. 73-75 provides a ligand contact to S-adenosyl-L-methionine; sequence AGY. Trp-122 lines the substrate pocket. An N6-methylated lysine; by autocatalysis modification is found at Lys-179. Tyr-223 is a binding site for S-adenosyl-L-methionine. Residues Ser-224 and Gln-226 each coordinate substrate. S-adenosyl-L-methionine contacts are provided by residues 251–252 and Tyr-297; that span reads NH. Lys-372 carries the post-translational modification N6-methylated lysine; by autocatalysis.

It belongs to the class V-like SAM-binding methyltransferase superfamily. Histone-lysine methyltransferase family. SETD6 subfamily. In terms of assembly, monomer, homodimer and homotrimer; these structures are stabilized in the presence of S-adenosyl-L-methionine (SAM). Post-translationally, automethylated.

The protein resides in the nucleus. The enzyme catalyses L-lysyl-[protein] + S-adenosyl-L-methionine = N(6)-methyl-L-lysyl-[protein] + S-adenosyl-L-homocysteine + H(+). The catalysed reaction is L-lysyl(8)-[histone H2AZ] + S-adenosyl-L-methionine = N(6)-methyl-L-lysyl(8)-[histone H2AZ] + S-adenosyl-L-homocysteine + H(+). Protein-lysine N-methyltransferase. Monomethylates 'Lys-310' of the RELA subunit of NF-kappa-B complex, leading to down-regulation of NF-kappa-B transcription factor activity. Monomethylates 'Lys-8' of H2AZ (H2AZK8me1). Required for the maintenance of embryonic stem cell self-renewal. Methylates PAK4. The protein is N-lysine methyltransferase SETD6 (Setd6) of Mus musculus (Mouse).